Consider the following 862-residue polypeptide: Phosphofurin acidic cluster sorting protein 2 (862 aa).

3 disordered regions span residues 151-215, 263-436, and 658-713; these read HEDS…TTSM, LDVE…TRSQ, and SSAT…SQGV. Residues 263–272 show a composition bias toward low complexity; sequence LDVENPSDSG. A compositionally biased stretch (basic and acidic residues) spans 313–328; sequence SHREPPSPADVPEKTR. The segment covering 332–344 has biased composition (polar residues); it reads GKQQLSDSVSDTV. Residues Ser361, Ser387, Ser424, Ser662, and Ser665 each carry the phosphoserine modification. 2 stretches are compositionally biased toward low complexity: residues 658-693 and 700-710; these read SSATSGDSDDAAPSSSSILSSTPPSASTSPAAKEAS and PSVSGGLSSPS.

The protein belongs to the PACS family. Interacts with BID and PKD2. Interacts with SIRT1. Interacts with HDAC1. Interacts with TRPV1. Interacts with WDR37.

It localises to the endoplasmic reticulum. The protein localises to the mitochondrion. Multifunctional sorting protein that controls the endoplasmic reticulum (ER)-mitochondria communication, including the apposition of mitochondria with the ER and ER homeostasis. In addition, in response to apoptotic inducer, translocates BIB to mitochondria, which initiates a sequence of events including the formation of mitochondrial truncated BID, the release of cytochrome c, the activation of caspase-3 thereby causing cell death. May also involved in ion channel trafficking, directing acidic cluster-containing ion channels to distinct subcellular compartments. This Mus musculus (Mouse) protein is Phosphofurin acidic cluster sorting protein 2 (Pacs2).